The chain runs to 219 residues: Interleukin-12 subunit alpha (219 aa).

The signal sequence occupies residues 1–22 (MCPARSLLLVATLVLLDYLSLA). Asn-24 and Asn-93 each carry an N-linked (GlcNAc...) asparagine glycan. 3 disulfide bridges follow: Cys-37–Cys-110, Cys-64–Cys-196, and Cys-85–Cys-123.

It belongs to the IL-6 superfamily. In terms of assembly, heterodimer with IL12B; disulfide-linked. This heterodimer is known as interleukin IL-12. Heterodimer with EBI3/IL27B; not disulfide-linked. This heterodimer is known as interleukin IL-35. Interacts with NBR1; this interaction promotes IL-12 secretion.

Its subcellular location is the secreted. Its function is as follows. Heterodimerizes with IL12B to form the IL-12 cytokine or with EBI3/IL27B to form the IL-35 cytokine. IL-12 is primarily produced by professional antigen-presenting cells (APCs) such as B-cells and dendritic cells (DCs) as well as macrophages and granulocytes and regulates T-cell and natural killer-cell responses, induces the production of interferon-gamma (IFN-gamma), favors the differentiation of T-helper 1 (Th1) cells and is an important link between innate resistance and adaptive immunity. Mechanistically, exerts its biological effects through a receptor composed of IL12R1 and IL12R2 subunits. Binding to the receptor results in the rapid tyrosine phosphorylation of a number of cellular substrates including the JAK family kinases TYK2 and JAK2. In turn, recruited STAT4 gets phosphorylated and translocates to the nucleus where it regulates cytokine/growth factor responsive genes. As part of IL-35, plays essential roles in maintaining the immune homeostasis of the liver microenvironment and also functions as an immune-suppressive cytokine. Mediates biological events through unconventional receptors composed of IL12RB2 and gp130/IL6ST heterodimers or homodimers. Signaling requires the transcription factors STAT1 and STAT4, which form a unique heterodimer that binds to distinct DNA sites. This chain is Interleukin-12 subunit alpha (IL12A), found in Papio anubis (Olive baboon).